The sequence spans 384 residues: Putative odorant receptor 98b (384 aa).

Topologically, residues 1-34 are cytoplasmic; it reads MLTDKFLRLQSALFRLLGLELLHEQDVGHRYPWR. The chain crosses the membrane as a helical span at residues 35–55; sequence SICCILSVASFMPLTIAFGLQ. At 56-66 the chain is on the extracellular side; sequence NVQNVEQLTDS. Residues 67-87 traverse the membrane as a helical segment; sequence LCSVLVDLLALCKIGLFLWLY. Over 88-128 the chain is Cytoplasmic; that stretch reads KDFKFLIGQFYCVLQTETHTAVAEMIVTRESRRDQFISAMY. Residues 129-149 traverse the membrane as a helical segment; sequence AYCFITAGLSACLMSPLSMLI. Topologically, residues 150-177 are extracellular; it reads SYQRTGELQPKFPFPSVYPWDNMKLSNY. The chain crosses the membrane as a helical span at residues 178 to 198; it reads IISYFWNVCAALGVALPTVCV. The Cytoplasmic segment spans residues 199–258; that stretch reads DTLFCSLSHNLCALFQIARHKMMHFEGRNTKETHENLKHVFQLYALCLNLGHFLNEYFRP. Residues 259–279 traverse the membrane as a helical segment; it reads LICQFVAASLHLCVLCYQLSA. Topologically, residues 280-284 are extracellular; that stretch reads NILQP. The helical transmembrane segment at 285–305 threads the bilayer; it reads ALLFYAAFTAAVVGQVSIYCF. Residues 306-329 lie on the Cytoplasmic side of the membrane; it reads CGSSIHSECQLFGQAIYESSWPHL. The helical transmembrane segment at 330–350 threads the bilayer; that stretch reads LQENLQLVSSLKIAMMRSSLG. Residues 351–384 are Extracellular-facing; sequence CPIDGYFFEANRETLITVSKAFIKVSKKTPQVND.

It belongs to the insect chemoreceptor superfamily. Heteromeric odorant receptor channel (TC 1.A.69) family. Or1a subfamily. Interacts with Orco. Complexes exist early in the endomembrane system in olfactory sensory neurons (OSNs), coupling these complexes to the conserved ciliary trafficking pathway.

Its subcellular location is the cell membrane. In terms of biological role, odorant receptor which mediates acceptance or avoidance behavior, depending on its substrates. The odorant receptor repertoire encodes a large collection of odor stimuli that vary widely in identity, intensity, and duration. May form a complex with Orco to form odorant-sensing units, providing sensitive and prolonged odorant signaling and calcium permeability. The sequence is that of Putative odorant receptor 98b (Or98b) from Drosophila melanogaster (Fruit fly).